The chain runs to 151 residues: Aspartate carbamoyltransferase regulatory chain (151 aa).

Zn(2+) contacts are provided by Cys-107, Cys-112, Cys-135, and Cys-138.

Belongs to the PyrI family. As to quaternary structure, contains catalytic and regulatory chains. It depends on Zn(2+) as a cofactor.

Functionally, involved in allosteric regulation of aspartate carbamoyltransferase. The protein is Aspartate carbamoyltransferase regulatory chain of Psychromonas ingrahamii (strain DSM 17664 / CCUG 51855 / 37).